Here is a 256-residue protein sequence, read N- to C-terminus: uncharacterized protein (256 aa).

This is an uncharacterized protein from Pasteurella multocida (strain Pm70).